Here is a 257-residue protein sequence, read N- to C-terminus: MEILQFIGYGNMAQAILEGSHEILSKRFILEITGRNPEKIAPFLQEKNIQAQIVPYKDAIDIHQKFVFLLFKPYNLKDFNYQGQAKSVLSALAGVNFEALSNAINSLHYLKCMPNIASKFALSSTAVCEKSVAPSISEKALNIIESFGNCVRVGNEEQVDSSVATNGSALAFLSLVASSLKDAGIREGLNAKDSLELVKMSFKGFAKLLEKERPEMIIEQICTPKGATIEGLSVLEKKGVRGAFIKACHESVKKMRL.

It belongs to the pyrroline-5-carboxylate reductase family.

It is found in the cytoplasm. The catalysed reaction is L-proline + NADP(+) = (S)-1-pyrroline-5-carboxylate + NADPH + 2 H(+). The enzyme catalyses L-proline + NAD(+) = (S)-1-pyrroline-5-carboxylate + NADH + 2 H(+). It participates in amino-acid biosynthesis; L-proline biosynthesis; L-proline from L-glutamate 5-semialdehyde: step 1/1. Catalyzes the reduction of 1-pyrroline-5-carboxylate (PCA) to L-proline. In Helicobacter pylori (strain J99 / ATCC 700824) (Campylobacter pylori J99), this protein is Pyrroline-5-carboxylate reductase.